The sequence spans 371 residues: Gustatory and pheromone receptor 39a, isoform A (371 aa).

Topologically, residues 1-41 (MSKVCRDLRIYLRLLHIMGMMCWHFDSDHCQLVATSGSERY) are cytoplasmic. The helical transmembrane segment at 42 to 62 (AVVYAGCILVSTTAGFIFALL) threads the bilayer. The Extracellular portion of the chain corresponds to 63–80 (HPSRFHIAIYNQTGNFYE). N-linked (GlcNAc...) asparagine glycosylation occurs at N73. Residues 81 to 101 (AVIFRSTCVVLFLVYVILYAW) form a helical membrane-spanning segment. Residues 102 to 127 (RHRYRDLVQHILRLNRRCASSCTNQQ) lie on the Cytoplasmic side of the membrane. Residues 128–148 (FLHNIILYGMLTILCFGNYLH) traverse the membrane as a helical segment. Residues 149–161 (GYTRAGLATLPLA) are Extracellular-facing. A helical membrane pass occupies residues 162–182 (LCMLVYIFAFLVLCLLLMFFV). Residues 183–228 (SLKQVMTAGLIHYNQQLCQGDLISGLRGRQQILKLCGGELNECFGL) are Cytoplasmic-facing. The helical transmembrane segment at 229–249 (LMLPIVALVLLMAPSGPFFLI) threads the bilayer. Residues 250-263 (STVLEGKFRPDECL) are Extracellular-facing. Residues 264-284 (IMLLTSSTWDTPWMIMLVLML) form a helical membrane-spanning segment. The Cytoplasmic portion of the chain corresponds to 285 to 340 (RTNGISEEANKTAKMLTKVPRTGTGLDRMIEKFLLKNLRQKPILTAYGFFALDKST). A helical transmembrane segment spans residues 341 to 361 (LFKLFTAIFTYMVILVQFKEM). The Extracellular segment spans residues 362-371 (ENSTKSINKF). Residue N363 is glycosylated (N-linked (GlcNAc...) asparagine).

The protein belongs to the insect chemoreceptor superfamily. Gustatory receptor (GR) family. Gr21a subfamily. Expressed in the adult labellar chemosensory neurons, and adult thorax and wing. In larvae, is expressed in neurons of the posterior pharyngeal sense organ.

The protein localises to the cell membrane. Gustatory receptor which mediates acceptance or avoidance behavior, depending on its substrates. Plays a role in sustaining courtship behavior in males, possibly through the reception of a stimulating arrestant pheromone. The protein is Gustatory and pheromone receptor 39a, isoform A (Gr39a) of Drosophila melanogaster (Fruit fly).